We begin with the raw amino-acid sequence, 269 residues long: Hydroxyethylthiazole kinase (269 aa).

Met45 serves as a coordination point for substrate. Residues Arg121 and Thr167 each coordinate ATP. Residue Gly194 coordinates substrate.

It belongs to the Thz kinase family. Mg(2+) is required as a cofactor.

It carries out the reaction 5-(2-hydroxyethyl)-4-methylthiazole + ATP = 4-methyl-5-(2-phosphooxyethyl)-thiazole + ADP + H(+). The protein operates within cofactor biosynthesis; thiamine diphosphate biosynthesis; 4-methyl-5-(2-phosphoethyl)-thiazole from 5-(2-hydroxyethyl)-4-methylthiazole: step 1/1. Its function is as follows. Catalyzes the phosphorylation of the hydroxyl group of 4-methyl-5-beta-hydroxyethylthiazole (THZ). This chain is Hydroxyethylthiazole kinase, found in Bacillus cereus (strain ATCC 14579 / DSM 31 / CCUG 7414 / JCM 2152 / NBRC 15305 / NCIMB 9373 / NCTC 2599 / NRRL B-3711).